A 264-amino-acid chain; its full sequence is Apolipoprotein A-I (264 aa).

The signal sequence occupies residues 1–18 (MKAVVLAVALVFLTGSQA). Tandem repeats lie at residues 67 to 88 (LNLL…ERLG) and 89 to 110 (PLTR…QEMN). Residues 67–264 (LNLLENWDTL…DKASETLTAQ (198 aa)) form a 10 X approximate tandem repeats region. The residue at position 109 (M109) is a Methionine sulfoxide. Residues 111-121 (KDLEEVKQKVQ) form a 3; half-length repeat. 3 consecutive repeat copies span residues 122 to 143 (PYLD…QKVA), 144 to 165 (PLGA…GRLS), and 166 to 187 (PVAE…TQLA). One copy of the 7; truncated repeat lies at 188–207 (PHSEQMRESLAQRLAELKSN). Methionine sulfoxide is present on M193. Repeat 8 spans residues 208 to 229 (PTLNEYHTRAKTHLKTLGEKAR). A 9; half-length repeat occupies 230–240 (PALEDLRHSLM). Residues M240 and M242 each carry the methionine sulfoxide modification. Repeat unit 10 spans residues 241 to 264 (PMLETLKTQVQSVIDKASETLTAQ).

It belongs to the apolipoprotein A1/A4/E family. As to quaternary structure, homodimer. Interacts with APOA1BP and CLU. Component of a sperm activating protein complex (SPAP), consisting of APOA1, an immunoglobulin heavy chain, an immunoglobulin light chain and albumin. Interacts with NDRG1. Interacts with SCGB3A2. Interacts with NAXE and YJEFN3. Post-translationally, glycosylated. In terms of processing, palmitoylated. May be acylated. Post-translationally, phosphorylation sites are present in the extracellular medium. As to expression, major protein of plasma HDL, also found in chylomicrons.

It localises to the secreted. Participates in the reverse transport of cholesterol from tissues to the liver for excretion by promoting cholesterol efflux from tissues and by acting as a cofactor for the lecithin cholesterol acyltransferase (LCAT). As part of the SPAP complex, activates spermatozoa motility. The polypeptide is Apolipoprotein A-I (Apoa1) (Mus musculus (Mouse)).